The primary structure comprises 856 residues: Centrosomal protein of 97 kDa (856 aa).

LRR repeat units follow at residues 37 to 58 (DVHT…EKCK), 59 to 80 (QLIQ…AKLT), 81 to 102 (QLRV…KDLV), 103 to 124 (HLEW…NSCT), 125 to 146 (ALQH…SKLI), 147 to 168 (SLKT…PAYL), 171 to 192 (NLSI…SFLA), and 196 to 205 (ELEQLSIMNN). The LRRCT domain occupies 211–249 (TPSIPGFDYRPFIVSWCLNLRVLDGYVISQKESLKAEWL). A CCP110-binding region spans residues 300–742 (HQRQLMSQSQ…KCVKDRDSEA (443 aa)). 2 positions are modified to phosphoserine: serine 308 and serine 410. The interval 430–451 (DDGADEFTKGLENQDEDKDKEK) is disordered. At serine 497 the chain carries Phosphoserine. The span at 498–513 (LTSLPESAGHSASRTE) shows a compositional bias: polar residues. The interval 498–525 (LTSLPESAGHSASRTEANSEEAMSPATS) is disordered. Serine 521 carries the phosphoserine modification. Position 534 is a phosphothreonine (threonine 534). Residues 550 to 579 (LNAAATKLQACWRGFYTRNYNQQAKGVRYE) enclose the IQ domain. The tract at residues 579–853 (EIRLRRMQEH…FQGLHVGVTV (275 aa)) is interaction with MPHOSPH9. 2 disordered regions span residues 646–672 (PPIS…DQSS) and 737–840 (DRDS…PPEC). Positions 737 to 752 (DRDSEATAEEHSDCSR) are enriched in basic and acidic residues. Over residues 753 to 773 (ESSASEQDNTLLQQYLTSVQQ) the composition is skewed to polar residues. Serine 755 carries the post-translational modification Phosphoserine. Over residues 776-787 (DAAEAADSDDVA) the composition is skewed to acidic residues. Basic and acidic residues predominate over residues 799–811 (ERFDASSDSETHR). The segment covering 812–833 (VASTSQDEISQTPENCQLNEEA) has biased composition (polar residues).

As to quaternary structure, interacts with CALM1, CEP76, KIF24 and TALPID3. Interacts with CCP110. ENKD1 competes with CEP97 for binding to CCP110, destabilizing the interaction between CP110 and CEP97 which promotes the removal of CCP110 and CEP97 from the mother centriole and allows the initiation of ciliogenesis. Via its interaction with CCP110, may indirectly interact with HERC2 and NEURL4. Interacts with MPHOSPH9.

The protein resides in the cytoplasm. It is found in the cytoskeleton. It localises to the microtubule organizing center. Its subcellular location is the centrosome. The protein localises to the centriole. In terms of biological role, acts as a key negative regulator of ciliogenesis in collaboration with CCP110 by capping the mother centriole thereby preventing cilia formation. Required for recruitment of CCP110 to the centrosome. The protein is Centrosomal protein of 97 kDa (Cep97) of Mus musculus (Mouse).